Here is a 221-residue protein sequence, read N- to C-terminus: MADNGTITVEELKQLLEQWNLVIGFIFLAWIMLLQFAYSNRNRFLYIIKLVFLWLLWPVTLACFVLAAVYRINWVTGGIAIAMACIVGLMWLSYFVASFRLFARTRSMWSFNPETNILLNVPLRGTILTRPLMESELVIGAVIIRGHLRMAGHSLGRCDIKDLPKEITVATSRTLSYYKLGASQRVGTDSGFAAYNRYRIGNYKLNTDHSGSNDNIALLVQ.

The Virion surface segment spans residues 1–18 (MADNGTITVEELKQLLEQ). A helical membrane pass occupies residues 19–39 (WNLVIGFIFLAWIMLLQFAYS). At 40–49 (NRNRFLYIIK) the chain is on the intravirion side. The chain crosses the membrane as a helical span at residues 50 to 70 (LVFLWLLWPVTLACFVLAAVY). Topologically, residues 71 to 78 (RINWVTGG) are virion surface. A helical membrane pass occupies residues 79 to 99 (IAIAMACIVGLMWLSYFVASF). At 100–221 (RLFARTRSMW…SNDNIALLVQ (122 aa)) the chain is on the intravirion side.

The protein belongs to the betacoronaviruses M protein family. As to quaternary structure, homomultimer. Interacts with envelope E protein in the budding compartment of the host cell, which is located between endoplasmic reticulum and the Golgi complex. Forms a complex with HE and S proteins. Interacts with nucleocapsid N protein. This interaction probably participates in RNA packaging into the virus.

Its subcellular location is the virion membrane. It is found in the host Golgi apparatus membrane. In terms of biological role, component of the viral envelope that plays a central role in virus morphogenesis and assembly via its interactions with other viral proteins. The sequence is that of Membrane protein from Bat coronavirus HKU3 (BtCoV).